Here is a 1140-residue protein sequence, read N- to C-terminus: Eukaryotic translation initiation factor 3 subunit A (1140 aa).

A PCI domain is found at 319 to 501; that stretch reads LQRMAAHVLL…NSIYFGTDLT (183 aa). Composition is skewed to basic and acidic residues over residues 588-623 and 829-899; these read QNNA…EERE and AAEE…RGGD. 2 disordered regions span residues 588-630 and 829-1140; these read QNNA…HQNE and AAEE…VKRR. Phosphoserine is present on serine 908. Basic and acidic residues-rich tracts occupy residues 920 to 976, 990 to 1051, 1059 to 1086, and 1109 to 1130; these read ERND…EPDS, SRDD…EPQR, DAPR…RGDQ, and TREE…KAGD.

The protein belongs to the eIF-3 subunit A family. In terms of assembly, component of the eukaryotic translation initiation factor 3 (eIF-3) complex. The eIF-3 complex interacts with pix.

The protein resides in the cytoplasm. RNA-binding component of the eukaryotic translation initiation factor 3 (eIF-3) complex, which is involved in protein synthesis of a specialized repertoire of mRNAs and, together with other initiation factors, stimulates binding of mRNA and methionyl-tRNAi to the 40S ribosome. The eIF-3 complex specifically targets and initiates translation of a subset of mRNAs involved in cell proliferation. This is Eukaryotic translation initiation factor 3 subunit A from Drosophila melanogaster (Fruit fly).